We begin with the raw amino-acid sequence, 327 residues long: GTPase Obg (327 aa).

An Obg domain is found at 2–160 (HLFKDSLNLI…LNLRLELSLI (159 aa)). The region spanning 161–326 (ADIGLVGLPN…LVSEFFSLVK (166 aa)) is the OBG-type G domain. GTP contacts are provided by residues 167 to 174 (GLPNAGKS), 192 to 196 (FTTKI), 213 to 216 (DLPG), 280 to 283 (SKLD), and 307 to 309 (SIY). S174 and T194 together coordinate Mg(2+).

The protein belongs to the TRAFAC class OBG-HflX-like GTPase superfamily. OBG GTPase family. In terms of assembly, monomer. It depends on Mg(2+) as a cofactor.

The protein localises to the cytoplasm. An essential GTPase which binds GTP, GDP and possibly (p)ppGpp with moderate affinity, with high nucleotide exchange rates and a fairly low GTP hydrolysis rate. Plays a role in control of the cell cycle, stress response, ribosome biogenesis and in those bacteria that undergo differentiation, in morphogenesis control. The protein is GTPase Obg of Borrelia duttonii (strain Ly).